Consider the following 418-residue polypeptide: Serine hydroxymethyltransferase (418 aa).

(6S)-5,6,7,8-tetrahydrofolate-binding positions include leucine 121 and glycine 125–leucine 127. Position 230 is an N6-(pyridoxal phosphate)lysine (lysine 230). Serine 356–phenylalanine 358 serves as a coordination point for (6S)-5,6,7,8-tetrahydrofolate.

It belongs to the SHMT family. As to quaternary structure, homodimer. It depends on pyridoxal 5'-phosphate as a cofactor.

Its subcellular location is the cytoplasm. It carries out the reaction (6R)-5,10-methylene-5,6,7,8-tetrahydrofolate + glycine + H2O = (6S)-5,6,7,8-tetrahydrofolate + L-serine. It functions in the pathway one-carbon metabolism; tetrahydrofolate interconversion. The protein operates within amino-acid biosynthesis; glycine biosynthesis; glycine from L-serine: step 1/1. Functionally, catalyzes the reversible interconversion of serine and glycine with tetrahydrofolate (THF) serving as the one-carbon carrier. This reaction serves as the major source of one-carbon groups required for the biosynthesis of purines, thymidylate, methionine, and other important biomolecules. Also exhibits THF-independent aldolase activity toward beta-hydroxyamino acids, producing glycine and aldehydes, via a retro-aldol mechanism. The chain is Serine hydroxymethyltransferase from Alteromonas mediterranea (strain DSM 17117 / CIP 110805 / LMG 28347 / Deep ecotype).